The chain runs to 307 residues: Aspartate carbamoyltransferase catalytic subunit (307 aa).

Residues R54 and T55 each coordinate carbamoyl phosphate. An L-aspartate-binding site is contributed by K83. Residues R104, H132, and Q135 each contribute to the carbamoyl phosphate site. R165 and R228 together coordinate L-aspartate. Residues L267 and P268 each coordinate carbamoyl phosphate.

This sequence belongs to the aspartate/ornithine carbamoyltransferase superfamily. ATCase family. Heterododecamer (2C3:3R2) of six catalytic PyrB chains organized as two trimers (C3), and six regulatory PyrI chains organized as three dimers (R2).

It carries out the reaction carbamoyl phosphate + L-aspartate = N-carbamoyl-L-aspartate + phosphate + H(+). It functions in the pathway pyrimidine metabolism; UMP biosynthesis via de novo pathway; (S)-dihydroorotate from bicarbonate: step 2/3. Catalyzes the condensation of carbamoyl phosphate and aspartate to form carbamoyl aspartate and inorganic phosphate, the committed step in the de novo pyrimidine nucleotide biosynthesis pathway. The protein is Aspartate carbamoyltransferase catalytic subunit of Clostridium perfringens (strain 13 / Type A).